A 754-amino-acid chain; its full sequence is Phosphoribosylformylglycinamidine synthase subunit PurL (754 aa).

Residue H54 is part of the active site. ATP-binding residues include Y57 and K101. A Mg(2+)-binding site is contributed by E103. Substrate contacts are provided by residues 104–107 and R126; that span reads SHNH. The Proton acceptor role is filled by H105. A Mg(2+)-binding site is contributed by D127. Position 252 (Q252) interacts with substrate. Mg(2+) is bound at residue D280. 324–326 provides a ligand contact to substrate; the sequence is ESQ. Residues 386–412 form a disordered region; it reads PVYQRPVSRPESQEALNADSSKGLPRP. Residues N512 and G549 each contribute to the ATP site. N550 contributes to the Mg(2+) binding site. S552 provides a ligand contact to substrate.

Belongs to the FGAMS family. As to quaternary structure, monomer. Part of the FGAM synthase complex composed of 1 PurL, 1 PurQ and 2 PurS subunits.

The protein localises to the cytoplasm. It carries out the reaction N(2)-formyl-N(1)-(5-phospho-beta-D-ribosyl)glycinamide + L-glutamine + ATP + H2O = 2-formamido-N(1)-(5-O-phospho-beta-D-ribosyl)acetamidine + L-glutamate + ADP + phosphate + H(+). Its pathway is purine metabolism; IMP biosynthesis via de novo pathway; 5-amino-1-(5-phospho-D-ribosyl)imidazole from N(2)-formyl-N(1)-(5-phospho-D-ribosyl)glycinamide: step 1/2. Its function is as follows. Part of the phosphoribosylformylglycinamidine synthase complex involved in the purines biosynthetic pathway. Catalyzes the ATP-dependent conversion of formylglycinamide ribonucleotide (FGAR) and glutamine to yield formylglycinamidine ribonucleotide (FGAM) and glutamate. The FGAM synthase complex is composed of three subunits. PurQ produces an ammonia molecule by converting glutamine to glutamate. PurL transfers the ammonia molecule to FGAR to form FGAM in an ATP-dependent manner. PurS interacts with PurQ and PurL and is thought to assist in the transfer of the ammonia molecule from PurQ to PurL. This chain is Phosphoribosylformylglycinamidine synthase subunit PurL, found in Mycobacterium leprae (strain Br4923).